The primary structure comprises 948 residues: MCNHHPKHSHGNDTIRIRGARTHNLKNVDLDIPRHKLVVVTGLSGSGKSSLAFDTLYAEGQRRYVESLSAYARQFLQMMDKPDVDLIEGLSPAISIEQKSTSHNPRSTVGTVTEIHDYLRLLYARVGTPYCPEHKLPLSSQTVSQMVDAVLKLPEDTRVMILAPAVRERKGEFVDFFADLQAQGFARVRVDGEVYQLDEVPKLEKNIKHNIDVVIDRVKVKADIKQRLAESFETALRHGNERALAMEMDSGEEHWFSARFACPVCSYSLPELEPRLFSFNNPMGSCPTCDGLGNTNFFDPEKVVAHPELSLASGAIDGWDKRNQFYFQMIQSLARHYGFDVQAAWETLPAKIKKVVLHGSGKEVIDFTYLSERGTTFNRSHAFEGIIPNLERRYRETDSETVREKLREYQNHRACPSCGGARLRKEARYVYVSGEPLHEVSAWPLTKTHRFFETLDLDGNKKQIAEKILKEITERLGFLINVGLDYLNLSRSAETLSGGEAQRIRLASQIGSGLTGVMYVLDEPSIGLHQRDNDRLLATLKRLRDLGNSVIVVEHDEDAIREADFVVDMGPGAGEHGGNVLIADTPENVAKCENSVTGQYLSGKKSIAVPSERTPVNPGRMLVLKGARGNNLKNVTLELPLGLITCITGVSGSGKSTLINDTLAKITARELNRAQEEPAPYDDIRGLEHLDKVINVDQSPIGRTPRSNPATYTGLFTPIRELFASVPLSRERGYNVGRFSFNVKGGRCEACQGDGVIKVEMHFLPDVYVPCEVCHGKRYNRETLEIQYKGKNISQVLDMTVEEACEFFDAVPTVSRKLQTLMDVGLGYIRLGQSATTLSGGEAQRVKLALELSKRDTGRTLYILDEPTTGLHFADIALLLEVIGRLKGKGNSIVIIEHNLDVIKTADWIVDLGPEGGDGGGRIIASGSPEEVAKVKGSYTGKYLKNIL.

42–49 contacts ATP; it reads GLSGSGKS. A C4-type zinc finger spans residues 262–289; that stretch reads CPVCSYSLPELEPRLFSFNNPMGSCPTC. 2 ABC transporter domains span residues 319–596 and 616–945; these read WDKR…ENSV and VNPG…KYLK. 649-656 contacts ATP; the sequence is GVSGSGKS. A C4-type zinc finger spans residues 748 to 774; it reads CEACQGDGVIKVEMHFLPDVYVPCEVC.

It belongs to the ABC transporter superfamily. UvrA family. Forms a heterotetramer with UvrB during the search for lesions.

It localises to the cytoplasm. Functionally, the UvrABC repair system catalyzes the recognition and processing of DNA lesions. UvrA is an ATPase and a DNA-binding protein. A damage recognition complex composed of 2 UvrA and 2 UvrB subunits scans DNA for abnormalities. When the presence of a lesion has been verified by UvrB, the UvrA molecules dissociate. In Neisseria meningitidis serogroup A / serotype 4A (strain DSM 15465 / Z2491), this protein is UvrABC system protein A.